Here is a 291-residue protein sequence, read N- to C-terminus: Methylsterol monooxygenase 1 (291 aa).

2 helical membrane-spanning segments follow: residues 55–75 (LIVH…FQFL) and 100–120 (MLLF…YYFT). In terms of domain architecture, Fatty acid hydroxylase spans 145–274 (CAVIEDTWHY…FTWWDRLFDT (130 aa)). The short motif at 157-161 (HRALH) is the Histidine box-1 element. A Histidine box-2 motif is present at residues 170–174 (HKVHH). A helical transmembrane segment spans residues 199-219 (FFIGTMVFCNHMILLWAWVTF). The Histidine box-3 signature appears at 249–255 (FHDFHHM).

The protein belongs to the sterol desaturase family. Fe cation is required as a cofactor.

It localises to the endoplasmic reticulum membrane. It carries out the reaction 4,4-dimethyl-5alpha-cholest-7-en-3beta-ol + 6 Fe(II)-[cytochrome b5] + 3 O2 + 5 H(+) = 4alpha-carboxy-4beta-methyl-5alpha-cholest-7-ene-3beta-ol + 6 Fe(III)-[cytochrome b5] + 4 H2O. It participates in steroid biosynthesis; zymosterol biosynthesis; zymosterol from lanosterol: step 3/6. Its function is as follows. Catalyzes the first step in the removal of the two C-4 methyl groups of 4,4-dimethylzymosterol. This is Methylsterol monooxygenase 1 (msmo1) from Danio rerio (Zebrafish).